Reading from the N-terminus, the 834-residue chain is Structure-specific endonuclease subunit SLX4 (834 aa).

Disordered stretches follow at residues 80–105 (RVPR…KTTT), 272–307 (TVPA…QKGK), 332–372 (QNVA…GRPV), 401–421 (GYPE…SNSA), 603–649 (ESKP…AKAL), and 720–740 (ATPN…SIEP). The span at 279-295 (PTESSTTEDVQGSSSKQ) shows a compositional bias: polar residues. Basic residues predominate over residues 296-305 (QRVKAKKPQK). 2 stretches are compositionally biased toward polar residues: residues 345 to 366 (SNRP…TLKN) and 412 to 421 (DTQNSPSNSA). Residues 611–630 (DDARKNGFRKENHSDVRVRP) are compositionally biased toward basic and acidic residues. Residues 729–740 (QGSSSASFSIEP) show a composition bias toward low complexity.

The protein belongs to the SLX4 family. Forms a heterodimer with SLX1. Phosphorylated in response to DNA damage.

It is found in the nucleus. Its function is as follows. Regulatory subunit of the SLX1-SLX4 structure-specific endonuclease that resolves DNA secondary structures generated during DNA repair and recombination. Has endonuclease activity towards branched DNA substrates, introducing single-strand cuts in duplex DNA close to junctions with ss-DNA. The protein is Structure-specific endonuclease subunit SLX4 of Ajellomyces capsulatus (strain NAm1 / WU24) (Darling's disease fungus).